A 472-amino-acid polypeptide reads, in one-letter code: 3-isopropylmalate dehydratase large subunit (472 aa).

Cys349, Cys409, and Cys412 together coordinate [4Fe-4S] cluster.

This sequence belongs to the aconitase/IPM isomerase family. LeuC type 1 subfamily. In terms of assembly, heterodimer of LeuC and LeuD. The cofactor is [4Fe-4S] cluster.

The catalysed reaction is (2R,3S)-3-isopropylmalate = (2S)-2-isopropylmalate. The protein operates within amino-acid biosynthesis; L-leucine biosynthesis; L-leucine from 3-methyl-2-oxobutanoate: step 2/4. Its function is as follows. Catalyzes the isomerization between 2-isopropylmalate and 3-isopropylmalate, via the formation of 2-isopropylmaleate. In Rhodospirillum rubrum (strain ATCC 11170 / ATH 1.1.1 / DSM 467 / LMG 4362 / NCIMB 8255 / S1), this protein is 3-isopropylmalate dehydratase large subunit.